We begin with the raw amino-acid sequence, 271 residues long: GPN-loop GTPase 3 (271 aa).

13-18 (GAGKST) provides a ligand contact to GTP. The Gly-Pro-Asn (GPN)-loop; involved in dimer interface signature appears at 70–72 (GPN). 173–176 (SKLD) lines the GTP pocket.

The protein belongs to the GPN-loop GTPase family. In terms of assembly, heterodimers with GPN1 or GPN2. Binds to RNA polymerase II (RNAPII).

Its function is as follows. Small GTPase required for proper nuclear import of RNA polymerase II and III (RNAPII and RNAPIII). May act at an RNAP assembly step prior to nuclear import. This chain is GPN-loop GTPase 3, found in Candida glabrata (strain ATCC 2001 / BCRC 20586 / JCM 3761 / NBRC 0622 / NRRL Y-65 / CBS 138) (Yeast).